The following is a 464-amino-acid chain: tRNA modification GTPase MnmE (464 aa).

Residues R23, E84, and R123 each contribute to the (6S)-5-formyl-5,6,7,8-tetrahydrofolate site. The TrmE-type G domain maps to 216–386; it reads GARATLVGRP…LGATVARLLL (171 aa). A K(+)-binding site is contributed by N226. Residues 226–231, 245–251, and 270–273 each bind GTP; these read NAGKSS, TPIPGTT, and DTAG. S230 serves as a coordination point for Mg(2+). K(+)-binding residues include T245, I247, and T250. Residue T251 coordinates Mg(2+). K464 is a (6S)-5-formyl-5,6,7,8-tetrahydrofolate binding site.

Belongs to the TRAFAC class TrmE-Era-EngA-EngB-Septin-like GTPase superfamily. TrmE GTPase family. As to quaternary structure, homodimer. Heterotetramer of two MnmE and two MnmG subunits. It depends on K(+) as a cofactor.

It is found in the cytoplasm. Its function is as follows. Exhibits a very high intrinsic GTPase hydrolysis rate. Involved in the addition of a carboxymethylaminomethyl (cmnm) group at the wobble position (U34) of certain tRNAs, forming tRNA-cmnm(5)s(2)U34. This Roseiflexus castenholzii (strain DSM 13941 / HLO8) protein is tRNA modification GTPase MnmE.